Consider the following 121-residue polypeptide: Inner membrane protein YhaH (121 aa).

The Periplasmic segment spans residues 1 to 23; sequence MDWYLKVLKNYVGFRGRARRKEY. A helical transmembrane segment spans residues 24-44; sequence WMFILVNIIFTFVLGLLDKML. The Cytoplasmic portion of the chain corresponds to 45–49; that stretch reads GWQRA. Residues 50–70 traverse the membrane as a helical segment; that stretch reads GGEGILTTIYGILVFLPWWAV. Residues 71–80 lie on the Periplasmic side of the membrane; sequence QFRRLHDTDR. The helical transmembrane segment at 81–101 threads the bilayer; sequence SAWWALLFLIPFIGWLIIIVF. The Cytoplasmic portion of the chain corresponds to 102-121; it reads NCQAGTPGENRFGPDPKLEP.

It to E.coli YhaI.

It localises to the cell inner membrane. The chain is Inner membrane protein YhaH (yhaH) from Escherichia coli O157:H7.